A 470-amino-acid polypeptide reads, in one-letter code: MSNRRKNSLYPTLSAELSALMRTGWADTERHDLAPAEQAPYAALRRAALSARFPGERLVVPSGNLKVRSNDDTYPFRSYSGYVHMTGDQARDGALVLEPRPDGGHDAYCYQLPRDSRDDDEFWTGAHAELWTGRRRSLAESERVLGLPCRDVRTAAADLAAVSEVRTRIVRGIDPALEAAVTTDEERDAELEDALSDLRLVKDAWELGELRKAVDSTVRGFTDVVGELSRAVASSERWLEGTFFRRARLEGNAVGYGTICAAGEHATIMHWTDNDGPVRPGDLLLLDAGVETRSLYTADVTRTLPISGTFTPLQREVYDAVYEAQEAGIATVKPGAAYRDFHEAAQRHLAARLVEWGFIEGPAERAYELGLQRRFTMAGTGHMLGLDVHDCARARTEEYVEGVLEPGMCLTVEPGLYFQADDLTVPEEWRGIGVRIEDDLVVTEDGHENLSAGLPRSADEVEAWMARFAG.

Mn(2+) is bound by residues aspartate 287, aspartate 299, histidine 382, glutamate 413, and glutamate 437.

It belongs to the peptidase M24B family. Homodimer. The cofactor is Mn(2+).

The catalysed reaction is Release of any N-terminal amino acid, including proline, that is linked to proline, even from a dipeptide or tripeptide.. The chain is Xaa-Pro aminopeptidase 2 (pepP2) from Streptomyces coelicolor (strain ATCC BAA-471 / A3(2) / M145).